The chain runs to 536 residues: Phosphoenolpyruvate carboxykinase (ATP) (536 aa).

3 residues coordinate substrate: Arg61, Tyr195, and Lys201. ATP-binding positions include Lys201, His220, and 236-244; that span reads GLSGTGKTT. The Mn(2+) site is built by Lys201 and His220. Asp257 provides a ligand contact to Mn(2+). ATP contacts are provided by Glu285, Arg322, and Thr447. Position 322 (Arg322) interacts with substrate.

This sequence belongs to the phosphoenolpyruvate carboxykinase (ATP) family. Mn(2+) is required as a cofactor.

The protein resides in the cytoplasm. The catalysed reaction is oxaloacetate + ATP = phosphoenolpyruvate + ADP + CO2. The protein operates within carbohydrate biosynthesis; gluconeogenesis. In terms of biological role, involved in the gluconeogenesis. Catalyzes the conversion of oxaloacetate (OAA) to phosphoenolpyruvate (PEP) through direct phosphoryl transfer between the nucleoside triphosphate and OAA. The sequence is that of Phosphoenolpyruvate carboxykinase (ATP) from Agrobacterium fabrum (strain C58 / ATCC 33970) (Agrobacterium tumefaciens (strain C58)).